The chain runs to 462 residues: A-type ATP synthase subunit B (462 aa).

Belongs to the ATPase alpha/beta chains family. As to quaternary structure, has multiple subunits with at least A(3), B(3), C, D, E, F, H, I and proteolipid K(x).

The protein localises to the cell membrane. Component of the A-type ATP synthase that produces ATP from ADP in the presence of a proton gradient across the membrane. The B chain is a regulatory subunit. The sequence is that of A-type ATP synthase subunit B from Pyrococcus abyssi (strain GE5 / Orsay).